The following is a 385-amino-acid chain: 8-amino-7-oxononanoate synthase (385 aa).

A substrate-binding site is contributed by R21. 108-109 (GF) contributes to the pyridoxal 5'-phosphate binding site. H133 contributes to the substrate binding site. Pyridoxal 5'-phosphate contacts are provided by S179, H207, and T233. K236 carries the post-translational modification N6-(pyridoxal phosphate)lysine. T352 contacts substrate.

Belongs to the class-II pyridoxal-phosphate-dependent aminotransferase family. BioF subfamily. In terms of assembly, homodimer. Pyridoxal 5'-phosphate serves as cofactor.

It carries out the reaction 6-carboxyhexanoyl-[ACP] + L-alanine + H(+) = (8S)-8-amino-7-oxononanoate + holo-[ACP] + CO2. The protein operates within cofactor biosynthesis; biotin biosynthesis. Its function is as follows. Catalyzes the decarboxylative condensation of pimeloyl-[acyl-carrier protein] and L-alanine to produce 8-amino-7-oxononanoate (AON), [acyl-carrier protein], and carbon dioxide. The sequence is that of 8-amino-7-oxononanoate synthase from Klebsiella pneumoniae (strain 342).